Reading from the N-terminus, the 424-residue chain is Insertion element IS2A uncharacterized 48.2 kDa protein (424 aa).

Residues 229-412 (KPAVPPSKRA…SPREYLRHGA (184 aa)) form the Integrase catalytic domain.

It belongs to the transposase 8 family.

In Escherichia coli, this protein is Insertion element IS2A uncharacterized 48.2 kDa protein.